Consider the following 103-residue polypeptide: DNA-directed RNA polymerase subunit omega (103 aa).

Residues 52–103 (EIESGNVTIHPDPEGKREAVRRRIEEEKRRKEEEEKKIKEQIAKEKEDGEKI) are disordered. The segment covering 62-103 (PDPEGKREAVRRRIEEEKRRKEEEEKKIKEQIAKEKEDGEKI) has biased composition (basic and acidic residues).

Belongs to the RNA polymerase subunit omega family. In terms of assembly, the RNAP catalytic core consists of 2 alpha, 1 beta, 1 beta' and 1 omega subunit. When a sigma factor is associated with the core the holoenzyme is formed, which can initiate transcription.

The enzyme catalyses RNA(n) + a ribonucleoside 5'-triphosphate = RNA(n+1) + diphosphate. In terms of biological role, promotes RNA polymerase assembly. Latches the N- and C-terminal regions of the beta' subunit thereby facilitating its interaction with the beta and alpha subunits. This is DNA-directed RNA polymerase subunit omega from Streptococcus pneumoniae serotype 19F (strain G54).